Consider the following 335-residue polypeptide: Peroxidase 53 (335 aa).

A signal peptide spans 1–30 (MAVTNLPTCDGLFIISLIVIVSSIFGTSSA). Residue Gln-31 is modified to Pyrrolidone carboxylic acid. Asn-33 and Asn-43 each carry an N-linked (GlcNAc...) asparagine glycan. 4 cysteine pairs are disulfide-bonded: Cys-41–Cys-121, Cys-74–Cys-79, Cys-127–Cys-329, and Cys-206–Cys-238. His-72 acts as the Proton acceptor in catalysis. Residues Asp-73, Val-76, Gly-78, Asp-80, and Ser-82 each coordinate Ca(2+). N-linked (GlcNAc...) asparagine glycosylation is present at Asn-165. Pro-169 contacts substrate. Asn-177 carries N-linked (GlcNAc...) asparagine glycosylation. His-199 is a binding site for heme b. Thr-200 lines the Ca(2+) pocket. Residues Asn-215, Asn-227, and Asn-241 are each glycosylated (N-linked (GlcNAc...) asparagine). Residues Asp-251, Thr-254, and Asp-259 each contribute to the Ca(2+) site. Asn-297 carries N-linked (GlcNAc...) asparagine glycosylation.

This sequence belongs to the peroxidase family. Classical plant (class III) peroxidase subfamily. Ca(2+) is required as a cofactor. The cofactor is heme b. Mainly expressed in roots.

It is found in the secreted. It carries out the reaction 2 a phenolic donor + H2O2 = 2 a phenolic radical donor + 2 H2O. Its function is as follows. Removal of H(2)O(2), oxidation of toxic reductants, biosynthesis and degradation of lignin, suberization, auxin catabolism, response to environmental stresses such as wounding, pathogen attack and oxidative stress. These functions might be dependent on each isozyme/isoform in each plant tissue. Closely linked to lignin formation by showing monolignol substrate specificity. The protein is Peroxidase 53 (PER53) of Arabidopsis thaliana (Mouse-ear cress).